The chain runs to 471 residues: Tryptophanase (471 aa).

Residues Lys-5, Lys-115, and Lys-156 each carry the N6-acetyllysine modification. N6-(pyridoxal phosphate)lysine is present on Lys-270. Lys-450 bears the N6-acetyllysine mark.

It belongs to the beta-eliminating lyase family. In terms of assembly, homotetramer. The cofactor is pyridoxal 5'-phosphate.

It catalyses the reaction L-tryptophan + H2O = indole + pyruvate + NH4(+). Its pathway is amino-acid degradation; L-tryptophan degradation via pyruvate pathway; indole and pyruvate from L-tryptophan: step 1/1. The sequence is that of Tryptophanase from Shigella boydii serotype 18 (strain CDC 3083-94 / BS512).